The following is a 256-amino-acid chain: MDPAPSLAAELWRPHHHRHHFEASSVVTDQGSGSRGGGGSGRRRPRSDAGPEDDDLSKVVSTSAASGGGGGGGQDSDAPEAKRLKPMKSSDKNDSLRTEAGTDSGNSSKAADKNATPPEPPKQDYIHVRARRGQATDSHSLAERARREKISERMKILQDLVPGCNKVIGKASVLDEIINYIQSLQHQVEFLSMKLEAVNSHMINGIVAFPSKDFGAQPYNTAAGLTFDPQTTREFAQGSTSEWLHMQIGNAYERVT.

Positions 1 to 125 (MDPAPSLAAE…TPPEPPKQDY (125 aa)) are disordered. The segment covering 79 to 97 (PEAKRLKPMKSSDKNDSLR) has biased composition (basic and acidic residues). The interval 134-147 (QATDSHSLAERARR) is basic motif; degenerate. Positions 134 to 184 (QATDSHSLAERARREKISERMKILQDLVPGCNKVIGKASVLDEIINYIQSL) constitute a bHLH domain. The interval 148 to 184 (EKISERMKILQDLVPGCNKVIGKASVLDEIINYIQSL) is helix-loop-helix motif.

It belongs to the bHLH protein family. Interacts with RSS3. Forms a ternary complex with RSS3 and TIFY11A/JAZ9 in the nucleus.

It localises to the nucleus. Its function is as follows. Transcription factor that forms a ternary complex with RSS3 and TIFY11A/JAZ9 to negatively regulate jasmonate-responsive genes. The chain is Transcription factor BHLH094 from Oryza sativa subsp. japonica (Rice).